Reading from the N-terminus, the 327-residue chain is Probable cell division protein WhiA (327 aa).

The H-T-H motif DNA-binding region spans 277 to 310 (EELGRLADPPMTKDAVAGRIRRLLSMADRKAKQD). The disordered stretch occupies residues 304 to 327 (DRKAKQDGIPDTESAVTPDLLEDA).

It belongs to the WhiA family.

In terms of biological role, involved in cell division and chromosome segregation. The sequence is that of Probable cell division protein WhiA from Mycolicibacterium vanbaalenii (strain DSM 7251 / JCM 13017 / BCRC 16820 / KCTC 9966 / NRRL B-24157 / PYR-1) (Mycobacterium vanbaalenii).